A 158-amino-acid polypeptide reads, in one-letter code: Cyclic pyranopterin monophosphate synthase (158 aa).

Substrate-binding positions include 76–78 (LCH) and 114–115 (ME). Asp129 is an active-site residue.

This sequence belongs to the MoaC family. In terms of assembly, homohexamer; trimer of dimers.

The enzyme catalyses (8S)-3',8-cyclo-7,8-dihydroguanosine 5'-triphosphate = cyclic pyranopterin phosphate + diphosphate. The protein operates within cofactor biosynthesis; molybdopterin biosynthesis. In terms of biological role, catalyzes the conversion of (8S)-3',8-cyclo-7,8-dihydroguanosine 5'-triphosphate to cyclic pyranopterin monophosphate (cPMP). The polypeptide is Cyclic pyranopterin monophosphate synthase (Brucella anthropi (strain ATCC 49188 / DSM 6882 / CCUG 24695 / JCM 21032 / LMG 3331 / NBRC 15819 / NCTC 12168 / Alc 37) (Ochrobactrum anthropi)).